The chain runs to 412 residues: Putative competence-damage inducible protein (412 aa).

The protein belongs to the CinA family.

The protein is Putative competence-damage inducible protein of Bacillus cereus (strain AH187).